Reading from the N-terminus, the 187-residue chain is Putative adenylate kinase (187 aa).

5 residues coordinate ATP: Gly10, Gly12, Lys13, Thr14, and Val15. Positions 30–53 (SLSQFVIENKLYTEYDELRQSYII) are NMP. The LID stretch occupies residues 103–113 (GRGWADIKVAE). Arg104 lines the ATP pocket.

This sequence belongs to the adenylate kinase family. AK6 subfamily. In terms of assembly, interacts with uS11. Not a structural component of 40S pre-ribosomes, but transiently interacts with them by binding to uS11.

The enzyme catalyses AMP + ATP = 2 ADP. It catalyses the reaction ATP + H2O = ADP + phosphate + H(+). Its function is as follows. Broad-specificity nucleoside monophosphate (NMP) kinase that catalyzes the reversible transfer of the terminal phosphate group between nucleoside triphosphates and monophosphates. Also has ATPase activity. Involved in the late maturation steps of the 30S ribosomal particles, specifically 16S rRNA maturation. While NMP activity is not required for ribosome maturation, ATPase activity is. Associates transiently with small ribosomal subunit protein uS11. ATP hydrolysis breaks the interaction with uS11. May temporarily remove uS11 from the ribosome to enable a conformational change of the ribosomal RNA that is needed for the final maturation step of the small ribosomal subunit. This chain is Putative adenylate kinase, found in Saccharolobus islandicus (strain M.16.4 / Kamchatka #3) (Sulfolobus islandicus).